A 94-amino-acid polypeptide reads, in one-letter code: DNA-directed RNA polymerase subunit omega (94 aa).

Belongs to the RNA polymerase subunit omega family. The RNAP catalytic core consists of 2 alpha, 1 beta, 1 beta' and 1 omega subunit. When a sigma factor is associated with the core the holoenzyme is formed, which can initiate transcription.

It carries out the reaction RNA(n) + a ribonucleoside 5'-triphosphate = RNA(n+1) + diphosphate. Promotes RNA polymerase assembly. Latches the N- and C-terminal regions of the beta' subunit thereby facilitating its interaction with the beta and alpha subunits. The chain is DNA-directed RNA polymerase subunit omega from Shewanella pealeana (strain ATCC 700345 / ANG-SQ1).